The chain runs to 428 residues: Phosphomethylpyrimidine synthase 2 (428 aa).

Substrate is bound by residues Asn65, Met94, Tyr123, His158, 180-182 (SRG), 221-224 (DGMR), and Glu260. His264 is a binding site for Zn(2+). Residue Tyr287 coordinates substrate. Zn(2+) is bound at residue His328. Residues Cys405, Cys408, and Cys412 each contribute to the [4Fe-4S] cluster site.

The protein belongs to the ThiC family. Requires [4Fe-4S] cluster as cofactor.

It carries out the reaction 5-amino-1-(5-phospho-beta-D-ribosyl)imidazole + S-adenosyl-L-methionine = 4-amino-2-methyl-5-(phosphooxymethyl)pyrimidine + CO + 5'-deoxyadenosine + formate + L-methionine + 3 H(+). Its pathway is cofactor biosynthesis; thiamine diphosphate biosynthesis. In terms of biological role, catalyzes the synthesis of the hydroxymethylpyrimidine phosphate (HMP-P) moiety of thiamine from aminoimidazole ribotide (AIR) in a radical S-adenosyl-L-methionine (SAM)-dependent reaction. The sequence is that of Phosphomethylpyrimidine synthase 2 from Methanosarcina barkeri (strain Fusaro / DSM 804).